A 263-amino-acid chain; its full sequence is Flagellar L-ring protein (263 aa).

The signal sequence occupies residues 1 to 15 (MKRLLCLLLLTTLTG). Cys16 carries N-palmitoyl cysteine lipidation. Cys16 is lipidated: S-diacylglycerol cysteine. Positions 123 to 143 (KSADAELSKSNDSSMDPLQVG) are disordered.

Belongs to the FlgH family. The basal body constitutes a major portion of the flagellar organelle and consists of four rings (L,P,S, and M) mounted on a central rod.

It is found in the cell outer membrane. The protein localises to the bacterial flagellum basal body. Functionally, assembles around the rod to form the L-ring and probably protects the motor/basal body from shearing forces during rotation. This Aliivibrio fischeri (strain ATCC 700601 / ES114) (Vibrio fischeri) protein is Flagellar L-ring protein.